The chain runs to 741 residues: MPKLNRCAIAIFTILSAISSPTLLANINEPSGEAADIISQVADSHAIKYYNAADWQAEDNALPSLAELRDLVINQQKRVLVDFSQISDAEGQAEMQAQFRKAYGVGFANQFIVITEHKGELLFTPFDQAEEVDPQLLEAPRTARLLARSGFASPAPANSETNTLPHVAFYISVNRAISDEECTFNNSWLWKNEKGSRPFCKDANISLIYRVNLERSLQYGIVGSATPDAKIVRISLDDDSTGAGIHLNDQLGYRQFGASYTTLDAYFREWSTDAIAQDYRFVFNASNNKAQILKTFPVDNINEKFERKEVSGFELGVTGGVEVSGDGPKAKLEARASYTQSRWLTYNTQDYRIERNAKNAQAVSFTWNRQQYATAESLLNRSTDALWVNTYPVDVNRISPLSYASFVPKMDVIYKASATETGSTDFIIDSSVNIRPIYNGAYKHYYVVGAHQSYHGFEDTPRRRITKSASFTVDWDHPVFTGGRPVNLQLASFNNRCIQVDAQGRLAANTCDSQQSAQSFIYDQLGRYVSASNTKLCLDGEALDALQPCNQNLTQRWEWRKGTDELTNVYSGESLGHDKQTGELGLYASSNDAVSLRTITAYTDVFNAQESSPILGYTQGKMNQQRVGQDHRLYVRAGAAIDALGSASDLLVGGNGGSLSSVDLSGVKSITATSGDFQYGGQQLVALTFTYQDGRQQTVGSKAYVTNAHEDRFDLPAAAKITQLKIWSDDWLVKGVQFDLN.

Positions 1–25 are cleaved as a signal peptide; it reads MPKLNRCAIAIFTILSAISSPTLLA. The propeptide occupies 26 to 157; the sequence is NINEPSGEAA…RSGFASPAPA (132 aa). Disulfide bonds link cysteine 182–cysteine 200, cysteine 497–cysteine 511, and cysteine 537–cysteine 549. The Ricin B-type lectin domain occupies 484–575; the sequence is RPVNLQLASF…LTNVYSGESL (92 aa). The tract at residues 607-741 is beta-prism domain; the sequence is NAQESSPILG…LVKGVQFDLN (135 aa).

Belongs to the HlyA hemolysin family. Monomer. Homoheptamer. After binding to target membranes the protein assembles into a heptameric pre-pore complex. Proteolytic cleavage triggers a conformation change that is required for membrane insertion and pore formation. In terms of processing, proteolytical cleavage is required to convert the 80 kDa hemolysin precursor into the active 65 kDa hemolysin.

The protein resides in the secreted. It is found in the host cell membrane. Its function is as follows. Bacterial hemolysin that causes cytolysis by forming heptameric pores in target host membranes. In Vibrio cholerae serotype O1 (strain ATCC 39315 / El Tor Inaba N16961), this protein is Hemolysin (hlyA).